A 588-amino-acid polypeptide reads, in one-letter code: Protein kintoun (588 aa).

Disordered regions lie at residues 199–223 (PGYEAKEPPEERDLSPSTSHLPENS), 338–498 (PPLE…SSQE), and 510–535 (AANVNASDETSKRKPTEEQLEDADED). Positions 202–212 (EAKEPPEERDL) are enriched in basic and acidic residues. A compositionally biased stretch (polar residues) spans 350-361 (PNPTSDPQNENQ). Composition is skewed to basic and acidic residues over residues 362 to 382 (TRVEERVEEMAEKGGEQHQRG) and 393 to 433 (QVLE…KFEL). Polar residues predominate over residues 435-447 (DVQQENKGNCSNT). Positions 448–460 (KEVKCCRRTKDSL) are enriched in basic and acidic residues.

It belongs to the PIH1 family. Kintoun subfamily.

It is found in the cytoplasm. The protein resides in the dynein axonemal particle. Its function is as follows. Required for cytoplasmic pre-assembly of axonemal dyneins, thereby playing a central role in motility in cilia and flagella. Involved in pre-assembly of dynein arm complexes in the cytoplasm before intraflagellar transport loads them for the ciliary compartment. The chain is Protein kintoun from Oryzias latipes (Japanese rice fish).